Reading from the N-terminus, the 123-residue chain is Seminal vesicle secretory protein 5 (123 aa).

Residues M1 to S21 form the signal peptide. The interval G50–K123 is disordered. The segment covering S64–S75 has biased composition (low complexity). A compositionally biased stretch (basic and acidic residues) spans T77 to S87.

Belongs to the SVP2/SVP5/SVP6 family. In terms of tissue distribution, testis.

The protein localises to the secreted. The protein resides in the extracellular space. The protein is Seminal vesicle secretory protein 5 (Svs5) of Rattus norvegicus (Rat).